Here is a 1592-residue protein sequence, read N- to C-terminus: Serine/threonine-protein kinase mrck-1 (1592 aa).

The tract at residues 1–954 (MAEPPPDDSA…IFSPVSISAM (954 aa)) is involved in homo-dimerization. The Protein kinase domain maps to 83–351 (FEVLKVIGKG…LSDFQLHPFF (269 aa)). ATP-binding positions include 89–97 (IGKGAFGEV) and K112. D207 serves as the catalytic Proton acceptor. In terms of domain architecture, AGC-kinase C-terminal spans 352 to 426 (EGIDWNTIRD…THGSLLSDAR (75 aa)). At S415 the chain carries Phosphoserine. Y416 carries the phosphotyrosine modification. Coiled coils occupy residues 444 to 782 (ELME…KNNS) and 811 to 871 (LDLQ…IENS). Polar residues predominate over residues 782-796 (SPLTTSNYIQNTPSG). The interval 782–801 (SPLTTSNYIQNTPSGWGSRR) is disordered. An involved in binding to membranes, with a preference for di-phosphorylated phosphoinositides (PIPs) region spans residues 955-1534 (ERGHNFERMK…FRTIGKDDRS (580 aa)). The segment at 957-1007 (GHNFERMKIKTPTKCGHCTSILIGLDRQGLFCQSCQYACHVSCAERVSQSC) adopts a Phorbol-ester/DAG-type zinc-finger fold. The Zn(2+) site is built by H958, C971, C974, C988, C991, H996, C999, and C1007. A PH domain is found at 1026 to 1154 (GTAYEGLVKT…WVVALSELKT (129 aa)). One can recognise a CNH domain in the interval 1181–1479 (IRVAQCCAII…KPLSGDGILS (299 aa)). The CRIB domain occupies 1544–1557 (ISTPSDFMHIVHMG). Residues 1544 to 1557 (ISTPSDFMHIVHMG) are involved in interaction with cdc-42 (GTP-bound). Deletion prevents rescue of a null mutant; furthermore deleted form of mrck-1 is no longer recruited to the cell cortex and instead appears to be completely cytoplasmic.

It belongs to the protein kinase superfamily. AGC Ser/Thr protein kinase family. DMPK subfamily. In terms of assembly, homodimer, via N-terminal domains. Interacts (via the CRIB domain) with cdc-42 (GTP-bound), but with a lower affinity for cdc-42 bound to GDP; the interaction is direct and may play a role in the recruitment of mrck-1 to the apical membrane. It depends on Mg(2+) as a cofactor. Expressed in embryonic and L4 larval seam cells and in embryonic dorsal and ventral epidermal cells. Also expressed in the pharynx throughout development and in sublateral nerve cords in the L4 larva.

Its subcellular location is the cytoplasm. The protein localises to the cell cortex. It catalyses the reaction L-seryl-[protein] + ATP = O-phospho-L-seryl-[protein] + ADP + H(+). The enzyme catalyses L-threonyl-[protein] + ATP = O-phospho-L-threonyl-[protein] + ADP + H(+). Functionally, serine/threonine-protein kinase. Involved in regulating endoderm precursor cell movements during early gastrulation; activates apical myosin and thereby increases actomyosin contractility and tension in the apical cell cortex, probably as a result of recruitment of mrck-1 to the cortex by a combination of interaction with active cdc-42 and membrane binding. May phosphorylate and inactivate the phosphatase mel-11, and thereby contribute to the regulation of myosin II contractility during embryonic elongation. Involved in controlling canal length and Golgi/ER integrity during excretory canal elongation. The protein is Serine/threonine-protein kinase mrck-1 of Caenorhabditis elegans.